We begin with the raw amino-acid sequence, 295 residues long: Aquaporin-9 (295 aa).

The Cytoplasmic segment spans residues 1–24 (MQPEGAEKGKSFKQRLVLKSSLAK). The chain crosses the membrane as a helical span at residues 25–43 (ETLSEFLGTFILIVLGCGC). Residues 44–57 (VAQAILSRGRFGGV) are Extracellular-facing. The helical transmembrane segment at 58–77 (ITINVGFSMAVAMAIYVAGG) threads the bilayer. The Cytoplasmic segment spans residues 78–79 (VS). The discontinuously helical intramembrane region spans 80–92 (GGHINPAVSLAMC). An NPA 1 motif is present at residues 84–86 (NPA). Over 93–98 (LFGRMK) the chain is Cytoplasmic. A helical transmembrane segment spans residues 99 to 123 (WFKLPFYVGAQFLGAFVGAATVFGI). The Extracellular segment spans residues 124–160 (YYDGLMSFAGGKLLIVGENATAHIFATYPAPYLSLAN). A helical transmembrane segment spans residues 161 to 178 (AFADQVVATMILLIIVFA). Over 179 to 190 (IFDSRNLGAPRG) the chain is Cytoplasmic. A helical transmembrane segment spans residues 191 to 207 (LEPIAIGLLIIVIASSL). At 208–210 (GLN) the chain is on the extracellular side. The discontinuously helical intramembrane region spans 211–225 (SGCAMNPARDLSPRL). The NPA 2 motif lies at 216-218 (NPA). The Extracellular portion of the chain corresponds to 226 to 243 (FTALAGWGFEVFRAGNNF). The chain crosses the membrane as a helical span at residues 244–264 (WWIPVVGPLVGAVIGGLIYVL). The Cytoplasmic portion of the chain corresponds to 265–295 (VIEIHHPEPDSVFKTEQSEDKPEKYELSVIM).

It belongs to the MIP/aquaporin (TC 1.A.8) family. As to quaternary structure, homotetramer; each monomer provides an independent glycerol/water pore. As to expression, highly expressed in peripheral leukocytes. Also expressed in liver, lung, and spleen.

The protein resides in the cell membrane. Its subcellular location is the basolateral cell membrane. The enzyme catalyses glycerol(in) = glycerol(out). It catalyses the reaction H2O(in) = H2O(out). It carries out the reaction urea(in) = urea(out). The catalysed reaction is (S)-lactate(in) = (S)-lactate(out). The enzyme catalyses NH4(+)(in) = NH4(+)(out). It catalyses the reaction uracil(in) = uracil(out). It carries out the reaction adenine(out) = adenine(in). The catalysed reaction is 3-hydroxybutanoate(in) = 3-hydroxybutanoate(out). The enzyme catalyses D-sorbitol(in) = D-sorbitol(out). It catalyses the reaction D-mannitol(in) = D-mannitol(out). It carries out the reaction H2O2(out) = H2O2(in). The catalysed reaction is arsenite(in) = arsenite(out). The enzyme catalyses selenite(in) = selenite(out). Its function is as follows. Aquaglyceroporins form homotetrameric transmembrane channels, with each monomer independently mediating glycerol and water transport across the plasma membrane along their osmotic gradient. AQP9 is the primary route for glycerol uptake in hepatocytes, supporting hepatic gluconeogenesis. It exhibits broad specificity and may transport various small, non-charged solutes, including carbamides, polyols, purines, and pyrimidines. AQP9 may also facilitate hepatic urea extrusion. Due to its permeability to lactate, AQP9 might participate in the astrocyte-to-neuron lactate shuttle, supplying neurons with energy. Additionally, AQP9 is permeable to arsenite, contributing to arsenic excretion by the liver and providing partial protection against arsenic toxicity. It is also permeable to H2O2 in vivo. Could also be permeable to ammonium. The polypeptide is Aquaporin-9 (Homo sapiens (Human)).